The following is a 284-amino-acid chain: uncharacterized protein (284 aa).

Composition is skewed to low complexity over residues 110–123 and 130–149; these read NGPRGRQMNGPNNG and NGPMNGPNNNQFNGPMNGPN. The tract at residues 110–176 is disordered; sequence NGPRGRQMNG…PNEFDSDDDD (67 aa).

The protein localises to the virion. This is an uncharacterized protein from Acanthamoeba polyphaga mimivirus (APMV).